A 377-amino-acid chain; its full sequence is Chaperone protein DnaJ (377 aa).

Residues 5-70 enclose the J domain; sequence DYYEVLGLQK…QKRAAYDQYG (66 aa). The CR-type zinc-finger motif lies at 134–212; that stretch reads GCKKDIRLST…CHGDGRVQKA (79 aa). Residues cysteine 147, cysteine 150, cysteine 164, cysteine 167, cysteine 186, cysteine 189, cysteine 200, and cysteine 203 each contribute to the Zn(2+) site. CXXCXGXG motif repeat units lie at residues 147–154, 164–171, 186–193, and 200–207; these read CDNCHGTG, CPHCHGAG, CPSCHGTG, and CHSCHGDG.

Belongs to the DnaJ family. Homodimer. Zn(2+) serves as cofactor.

Its subcellular location is the cytoplasm. Participates actively in the response to hyperosmotic and heat shock by preventing the aggregation of stress-denatured proteins and by disaggregating proteins, also in an autonomous, DnaK-independent fashion. Unfolded proteins bind initially to DnaJ; upon interaction with the DnaJ-bound protein, DnaK hydrolyzes its bound ATP, resulting in the formation of a stable complex. GrpE releases ADP from DnaK; ATP binding to DnaK triggers the release of the substrate protein, thus completing the reaction cycle. Several rounds of ATP-dependent interactions between DnaJ, DnaK and GrpE are required for fully efficient folding. Also involved, together with DnaK and GrpE, in the DNA replication of plasmids through activation of initiation proteins. In Haemophilus ducreyi (strain 35000HP / ATCC 700724), this protein is Chaperone protein DnaJ.